Consider the following 155-residue polypeptide: UPF0260 protein Smed_0627 (155 aa).

The protein belongs to the UPF0260 family.

This is UPF0260 protein Smed_0627 from Sinorhizobium medicae (strain WSM419) (Ensifer medicae).